Here is a 161-residue protein sequence, read N- to C-terminus: Cyclic pyranopterin monophosphate synthase (161 aa).

Residues 78 to 80 and 116 to 117 contribute to the substrate site; these read LCH and ME. Aspartate 131 is an active-site residue.

This sequence belongs to the MoaC family. In terms of assembly, homohexamer; trimer of dimers.

It carries out the reaction (8S)-3',8-cyclo-7,8-dihydroguanosine 5'-triphosphate = cyclic pyranopterin phosphate + diphosphate. It participates in cofactor biosynthesis; molybdopterin biosynthesis. Its function is as follows. Catalyzes the conversion of (8S)-3',8-cyclo-7,8-dihydroguanosine 5'-triphosphate to cyclic pyranopterin monophosphate (cPMP). In Bordetella pertussis (strain Tohama I / ATCC BAA-589 / NCTC 13251), this protein is Cyclic pyranopterin monophosphate synthase.